A 369-amino-acid polypeptide reads, in one-letter code: tRNA 2-selenouridine synthase (369 aa).

The region spanning 12-136 is the Rhodanese domain; it reads FLEDTPLMDV…LRNFLFETTR (125 aa). The active-site S-selanylcysteine intermediate is Cys95.

Belongs to the SelU family. Monomer.

The enzyme catalyses 5-methylaminomethyl-2-thiouridine(34) in tRNA + selenophosphate + (2E)-geranyl diphosphate + H2O + H(+) = 5-methylaminomethyl-2-selenouridine(34) in tRNA + (2E)-thiogeraniol + phosphate + diphosphate. It carries out the reaction 5-methylaminomethyl-2-thiouridine(34) in tRNA + (2E)-geranyl diphosphate = 5-methylaminomethyl-S-(2E)-geranyl-thiouridine(34) in tRNA + diphosphate. The catalysed reaction is 5-methylaminomethyl-S-(2E)-geranyl-thiouridine(34) in tRNA + selenophosphate + H(+) = 5-methylaminomethyl-2-(Se-phospho)selenouridine(34) in tRNA + (2E)-thiogeraniol. It catalyses the reaction 5-methylaminomethyl-2-(Se-phospho)selenouridine(34) in tRNA + H2O = 5-methylaminomethyl-2-selenouridine(34) in tRNA + phosphate. In terms of biological role, involved in the post-transcriptional modification of the uridine at the wobble position (U34) of tRNA(Lys), tRNA(Glu) and tRNA(Gln). Catalyzes the conversion of 2-thiouridine (S2U-RNA) to 2-selenouridine (Se2U-RNA). Acts in a two-step process involving geranylation of 2-thiouridine (S2U) to S-geranyl-2-thiouridine (geS2U) and subsequent selenation of the latter derivative to 2-selenouridine (Se2U) in the tRNA chain. In Pseudomonas paraeruginosa (strain DSM 24068 / PA7) (Pseudomonas aeruginosa (strain PA7)), this protein is tRNA 2-selenouridine synthase.